Here is a 97-residue protein sequence, read N- to C-terminus: Co-chaperonin GroES (97 aa).

It belongs to the GroES chaperonin family. In terms of assembly, heptamer of 7 subunits arranged in a ring. Interacts with the chaperonin GroEL.

It localises to the cytoplasm. Together with the chaperonin GroEL, plays an essential role in assisting protein folding. The GroEL-GroES system forms a nano-cage that allows encapsulation of the non-native substrate proteins and provides a physical environment optimized to promote and accelerate protein folding. GroES binds to the apical surface of the GroEL ring, thereby capping the opening of the GroEL channel. The chain is Co-chaperonin GroES from Pseudomonas fluorescens (strain ATCC BAA-477 / NRRL B-23932 / Pf-5).